A 105-amino-acid chain; its full sequence is Nitrogen fixation nifHD1 region GlnB-like protein 1 (105 aa).

The protein belongs to the P(II) protein family.

Its function is as follows. Could be involved in the regulation of nitrogen fixation. The protein is Nitrogen fixation nifHD1 region GlnB-like protein 1 (glnBA) of Methanosarcina barkeri.